We begin with the raw amino-acid sequence, 297 residues long: Myozenin-1 (297 aa).

The interval 1–34 is disordered; the sequence is MPLSGTPAPNKKRKSSKLIMELTGGGQESSGLNL. The residue at position 82 (serine 82) is a Phosphoserine. The segment at 105–172 is disordered; it reads FSYSKSSGGG…ALPDNQAGGE (68 aa). A compositionally biased stretch (low complexity) spans 118 to 128; the sequence is RSGSAGQYGSD. Residues 136 to 162 show a composition bias toward gly residues; the sequence is SGSGSGSGSGPGSGGAGGPGGHSGRGG.

It belongs to the myozenin family. Interacts with ACTN2, ACTN3, FLNA, FLNB, FLNC, LDB3, PPP3CA and TCAP. Interacts via its C-terminal region with MYOT.

The protein resides in the nucleus. It is found in the cell projection. The protein localises to the pseudopodium. Functionally, myozenins may serve as intracellular binding proteins involved in linking Z-disk proteins such as alpha-actinin, gamma-filamin, TCAP/telethonin, LDB3/ZASP and localizing calcineurin signaling to the sarcomere. Plays an important role in the modulation of calcineurin signaling. May play a role in myofibrillogenesis. The sequence is that of Myozenin-1 (MYOZ1) from Bos taurus (Bovine).